A 4083-amino-acid polypeptide reads, in one-letter code: Dynein heavy chain, cytoplasmic (4083 aa).

The tract at residues 1–1745 (MTDDQVAQAL…TIEQSCVSFC (1745 aa)) is stem. Coiled-coil stretches lie at residues 127–166 (DAVVSTNSNLEAKQESINSARRKIKDLSLSLQSLQQFIEV), 381–402 (INQWEALLKEFTSLIRELMRKR), and 801–821 (KLDLQNLEVLINKIQLLVDQA). AAA stretches follow at residues 1746–1967 (YGFE…VLRN), 2026–2265 (SYLA…YKAD), 2373–2622 (SLES…WVRG), and 2716–2980 (TFAE…GNSQ). Residues 1784-1791 (GPAGTGKT), 2064-2071 (GDAGTGKT), 2412-2419 (GPPGSGKT), and 2754-2761 (GPNYSGKT) contribute to the ATP site. The stalk stretch occupies residues 2987 to 3294 (LTSLRRFQSL…RSIKLMESLT (308 aa)). Coiled coils occupy residues 3015 to 3085 (LEKL…NERR), 3223 to 3302 (LKEE…RWIK), and 3527 to 3607 (LEKE…VEDL). AAA regions lie at residues 3364–3592 (MVNP…EIAK) and 3748–3952 (LKSL…FLDH).

Belongs to the dynein heavy chain family. In terms of assembly, consists of at least two heavy chains and a number of intermediate and light chains.

The protein resides in the cytoplasm. It is found in the cytoskeleton. In terms of biological role, cytoplasmic dynein acts as a motor for the intracellular retrograde motility of vesicles and organelles along microtubules. Dynein has ATPase activity; the force-producing power stroke is thought to occur on release of ADP. Required to maintain uniform nuclear distribution in hyphae. May play an important role in the proper orientation of the mitotic spindle into the budding daughter cell yeast. Probably required for normal progression of the cell cycle. The polypeptide is Dynein heavy chain, cytoplasmic (DYN1) (Eremothecium gossypii (strain ATCC 10895 / CBS 109.51 / FGSC 9923 / NRRL Y-1056) (Yeast)).